The primary structure comprises 74 residues: Large ribosomal subunit protein bL31 (74 aa).

4 residues coordinate Zn(2+): C16, C18, C38, and C41.

The protein belongs to the bacterial ribosomal protein bL31 family. Type A subfamily. As to quaternary structure, part of the 50S ribosomal subunit. It depends on Zn(2+) as a cofactor.

Its function is as follows. Binds the 23S rRNA. This Salinispora arenicola (strain CNS-205) protein is Large ribosomal subunit protein bL31.